A 1639-amino-acid chain; its full sequence is Protein GFS12 (1639 aa).

Residues 206-294 form the Protein kinase 1 domain; that stretch reads LEEKSKLRCL…IRPSNILLSD (89 aa). The BEACH domain occupies 336–608; it reads LKISSHLDWQ…FHGFGVDNKR (273 aa). The 74-residue stretch at 715–788 folds into the Protein kinase 2 domain; it reads IAGDIFSIGC…AKSLLDSPYF (74 aa). 2 WD repeats span residues 1290–1333 and 1336–1373; these read AHHG…CVSS and AHEE…LISL. The span at 1377-1398 shows a compositional bias: low complexity; the sequence is SPSDQDQASSDPSSKNNSNPCN. Residues 1377-1399 form a disordered region; that stretch reads SPSDQDQASSDPSSKNNSNPCNR. WD repeat units follow at residues 1465-1499, 1511-1549, and 1609-1639; these read ALCS…RLFD, AHDG…TPQP, and RVKS…RICC.

It belongs to the protein kinase superfamily. Tyr protein kinase family. As to quaternary structure, interacts (via protein kinase 2 domain) with BCHC1 (via PH-BEACH domain). In terms of tissue distribution, weakly expressed in the cotyledons of germinating seedlings. Restricted to the vascular tissues of cotyledons. Detected in root tips, apical meristem, young flower buds and receptacles.

In terms of biological role, may act predominantly to suppress BCHC1, which itself is a negative factor in protein storage vacuole (PSV) trafficking regulation and plant effector triggered immunity (ETI). Required for ETI, but not for cell death. The chain is Protein GFS12 from Arabidopsis thaliana (Mouse-ear cress).